A 216-amino-acid chain; its full sequence is UPF0502 protein Ent638_1581 (216 aa).

This sequence belongs to the UPF0502 family.

This Enterobacter sp. (strain 638) protein is UPF0502 protein Ent638_1581.